The following is a 241-amino-acid chain: Demethylmenaquinone methyltransferase (241 aa).

The S-adenosyl-L-methionine site is built by T73 and D92.

This sequence belongs to the class I-like SAM-binding methyltransferase superfamily. MenG/UbiE family.

The catalysed reaction is a 2-demethylmenaquinol + S-adenosyl-L-methionine = a menaquinol + S-adenosyl-L-homocysteine + H(+). It participates in quinol/quinone metabolism; menaquinone biosynthesis; menaquinol from 1,4-dihydroxy-2-naphthoate: step 2/2. In terms of biological role, methyltransferase required for the conversion of demethylmenaquinol (DMKH2) to menaquinol (MKH2). The sequence is that of Demethylmenaquinone methyltransferase from Chlorobaculum parvum (strain DSM 263 / NCIMB 8327) (Chlorobium vibrioforme subsp. thiosulfatophilum).